The primary structure comprises 881 residues: Sodium/sulfate cotransporter 1 (881 aa).

6 helical membrane-spanning segments follow: residues glycine 8–glycine 28, isoleucine 31–alanine 51, glycine 61–leucine 81, methionine 107–isoleucine 127, leucine 140–serine 160, and isoleucine 186–leucine 206. 4 RCK C-terminal domains span residues leucine 212–leucine 296, valine 318–asparagine 402, leucine 407–leucine 492, and glutamate 498–phenylalanine 584. 6 consecutive transmembrane segments (helical) span residues methionine 601–lysine 621, tyrosine 625–methionine 645, valine 658–alanine 678, alanine 684–isoleucine 704, phenylalanine 775–valine 795, and valine 803–leucine 823. Positions serine 854 to alanine 881 are disordered.

This sequence belongs to the divalent anion:Na+ symporter (DASS) superfamily. Na+/sulfate symporter (TC 2.A.47.4) family.

It localises to the cell membrane. Functionally, na(+)/sulfate cotransporter with a probable high-affinity for sulfate and a proteasome dependent turnover. The sequence is that of Sodium/sulfate cotransporter 1 (SLT1) from Chlamydomonas reinhardtii (Chlamydomonas smithii).